The primary structure comprises 168 residues: Large ribosomal subunit protein uL10 (168 aa).

The protein belongs to the universal ribosomal protein uL10 family. Part of the ribosomal stalk of the 50S ribosomal subunit. The N-terminus interacts with L11 and the large rRNA to form the base of the stalk. The C-terminus forms an elongated spine to which L12 dimers bind in a sequential fashion forming a multimeric L10(L12)X complex.

Functionally, forms part of the ribosomal stalk, playing a central role in the interaction of the ribosome with GTP-bound translation factors. This is Large ribosomal subunit protein uL10 from Lacticaseibacillus casei (strain BL23) (Lactobacillus casei).